The primary structure comprises 212 residues: Probable GTP-binding protein EngB (212 aa).

Residues 38-210 (SLPEIAFVGK…KASLAKCIKP (173 aa)) form the EngB-type G domain. Residues 46-53 (GKSNVGKS), 73-77 (GRTRQ), 91-94 (DLPG), 158-161 (TKSD), and 189-191 (VSN) each bind GTP. Mg(2+)-binding residues include serine 53 and threonine 75.

Belongs to the TRAFAC class TrmE-Era-EngA-EngB-Septin-like GTPase superfamily. EngB GTPase family. Mg(2+) is required as a cofactor.

In terms of biological role, necessary for normal cell division and for the maintenance of normal septation. This chain is Probable GTP-binding protein EngB, found in Rickettsia peacockii (strain Rustic).